A 482-amino-acid chain; its full sequence is Spore germination protein A1 (482 aa).

6 helical membrane-spanning segments follow: residues Val-242 to Leu-262, Phe-284 to His-304, Glu-321 to Leu-341, Pro-351 to Ala-371, Leu-373 to Pro-393, and Phe-406 to Val-426.

The protein belongs to the GerABKA family.

The protein resides in the cell membrane. Its function is as follows. Forms a complex at the inner spore membrane which acts as a receptor for L-alanine, thus is involved in the stimulation of germination in response to alanine. Can stimulate germination in the absence of GerD and GerK gene products (fructose and glucose receptors, respectively), but the response is improved in their presence. The chain is Spore germination protein A1 (gerAA) from Bacillus subtilis (strain 168).